The sequence spans 324 residues: Disintegrin-like/cysteine-rich protein MPIII-3 (324 aa).

The N-terminal stretch at 1–20 is a signal peptide; the sequence is MIQVLLVIICLAVFPYQVSS. The propeptide at 21–173 is or 174 (in a minor form); the sequence is IILESGNINN…DEDPKKCEFR (153 aa). Positions 168–207 constitute a Disintegrin; truncated domain; sequence KKCEFRRAGTECRPARSECDVAEYCTGQSAECPTDVFHSN. Residues 179–192 form an inhibits platelet aggregation region; sequence CRPARSECDVAEYC. Intrachain disulfides connect cysteine 179-cysteine 199, cysteine 186-cysteine 218, cysteine 192-cysteine 199, cysteine 211-cysteine 223, cysteine 230-cysteine 280, cysteine 245-cysteine 287, cysteine 258-cysteine 268, cysteine 275-cysteine 312, and cysteine 306-cysteine 317. A D/ECD-tripeptide motif is present at residues 185 to 187; the sequence is ECD. The Ca(2+) site is built by aspartate 187 and glutamate 190. Residues aspartate 202 and valine 203 each coordinate Ca(2+). Asparagine 237 carries an N-linked (GlcNAc...) asparagine glycan.

It belongs to the venom metalloproteinase (M12B) family. P-III subfamily. P-IIIe sub-subfamily. In terms of assembly, monomer. Is able to form a homodimer. Post-translationally, N-glycosylated. Exists in at least six differently N-glycosylated forms. The glycans likely have a stabilizing purpose. Cys-199 forms a disulfide bond with Cys-192 in 90% and with Cys-179 in 10% of the protein molecules; alternative disulfide bonds may have a major effect on the conformation of the protein. As to expression, expressed by the venom gland (at protein level). Expressed by the venom gland.

Its subcellular location is the secreted. Its activity is regulated as follows. Activity may be regulated by the intramolecular thiol-disulfide exchange or disulfide bond switching. Functionally, abolishes platelet aggregation induced by collagen, ADP (IC(50)=292 nM) and arachidonic-acid. The inhibition of collagen-induced platelet aggregation may be due to its ability to bind collagen and block the binding site on collagen for platelets and/or to its ability to bind to the platelet alpha-2/beta-1 collagen receptor (ITGA2/ITGB1) to block its interaction with collagen and hence prevent platelet stimulation. The inhibition of ADP- or arachidonic-acid-induced platelet aggregation may be due to it acting as an antagonist of the ADP receptors or thromboxane-prostanoid receptors of the platelets, respectively. Does not interact with integrins alpha-IIb (ITGA2B) or beta-3 (ITGB3) nor platelet glycoproteins VI (GP6) or IX (GP9) in vitro, however, the detection is dependent on experimental conditions and may happen in vivo. Able to bind to platelet glycoprotein Ib alpha chain (GP1BA) receptor in vitro, although this interaction may have pathologically only limited effect in vivo as it is not able to abolish the von Willebrand factor (vWF)-dependent platelet agglutination induced by ristocetin. Does not affect blood coagulation. The protein is Disintegrin-like/cysteine-rich protein MPIII-3 of Vipera ammodytes ammodytes (Western sand viper).